We begin with the raw amino-acid sequence, 193 residues long: Cerebellin-1 (193 aa).

Positions 1-21 (MLGVLELLLLGAAWLAGPARG) are cleaved as a signal peptide. N23 carries an N-linked (GlcNAc...) asparagine glycan. Residues 34–38 (CLVVC) are essential for interaction with NRXN1 and linker of two C1q trimers into disulfide-linked hexamers. In terms of domain architecture, C1q spans 57–193 (SGSAKVAFSA…TFSGFLVFPL (137 aa)). Positions 62 to 193 (VAFSAIRSTN…TFSGFLVFPL (132 aa)) are necessary for interaction with CBLN3, and homotrimerization. An N-linked (GlcNAc...) asparagine glycan is attached at N79. Positions 122–147 (YNRQTIQVSLMLNGWPVISAFAGDQD) are essential for interaction with GRID2.

In terms of assembly, homohexamer; disulfide-linked homotrimers. The trimers associate via N-terminal cysteine residues to form disulfide-linked hexamers. May form oligomers with CBLN2, CBLN3 AND CBLN4 prior to secretion. Once secreted, does not interact with other CBLN family members. Interacts with GRID1. Interacts with NRXN1 and NRXN2 long (alpha) and short (beta) isoforms produced by alternative promoter usage. Competes with NLGN1 for NRXN1-binding. Weakly interacts with NRXN3 short isoform and not at all with NRXN3 long isoform. Interacts (via C1q domain) with GRID2; GRID2-binding is calcium-independent; CBLN1 hexamers anchor GRID2 N-terminal domain dimers to monomeric NRXN1 isoform beta; promotes synaptogenesis and mediates the D-Serine-dependent long term depression signals and AMPA receptor endocytosis. Interacts with OTOL1. In terms of processing, the proteolytic processing to yield cerebellin seems to occur either prior to the secretion by presynaptic neurons and subsequent oligomerization or in some other location after release of the mature protein. Post-translationally, sialoglycoprotein. In terms of tissue distribution, in the Purkinje cells postsynaptic structures. In the cerebellum, cerebellin is much less abundant than [des-Ser1]-cerebellin.

The protein resides in the secreted. It is found in the postsynaptic cell membrane. Functionally, required for synapse integrity and synaptic plasticity. During cerebellar synapse formation, essential for the matching and maintenance of pre- and post-synaptic elements at parallel fiber-Purkinje cell synapses, the establishment of the proper pattern of climbing fiber-Purkinje cell innervation, and induction of long-term depression at parallel fiber-Purkinje cell synapses. Plays a role as a synaptic organizer that acts bidirectionally on both pre- and post-synaptic components. On the one hand induces accumulation of synaptic vesicles in the pre-synaptic part by binding with NRXN1 and in other hand induces clustering of GRID2 and its associated proteins at the post-synaptic site through association of GRID2. NRXN1-CBLN1-GRID2 complex directly induces parallel fiber protrusions that encapsulate spines of Purkinje cells leading to accumulation of GRID2 and synaptic vesicles. Required for CBLN3 export from the endoplasmic reticulum and secretion. NRXN1-CBLN1-GRID2 complex mediates the D-Serine-dependent long term depression signals and AMPA receptor endocytosis. Essential for long-term maintenance but not establishment of excitatory synapses. Inhibits the formation and function of inhibitory GABAergic synapses in cerebellar Purkinje cells. The cerebellin peptide exerts neuromodulatory functions. Directly stimulates norepinephrine release via the adenylate cyclase/PKA-dependent signaling pathway; and indirectly enhances adrenocortical secretion in vivo, through a paracrine mechanism involving medullary catecholamine release. This chain is Cerebellin-1 (CBLN1), found in Homo sapiens (Human).